Here is a 386-residue protein sequence, read N- to C-terminus: S-adenosylmethionine synthase (386 aa).

ATP is bound at residue H14. Position 16 (D16) interacts with Mg(2+). E42 lines the K(+) pocket. L-methionine contacts are provided by E55 and Q101. The flexible loop stretch occupies residues Q101–E111. ATP is bound by residues D166–K168, R233–F234, D242, R248–K249, A265, and K269. Position 242 (D242) interacts with L-methionine. K273 lines the L-methionine pocket.

Belongs to the AdoMet synthase family. As to quaternary structure, homotetramer; dimer of dimers. Mg(2+) serves as cofactor. Requires K(+) as cofactor.

Its subcellular location is the cytoplasm. The catalysed reaction is L-methionine + ATP + H2O = S-adenosyl-L-methionine + phosphate + diphosphate. It participates in amino-acid biosynthesis; S-adenosyl-L-methionine biosynthesis; S-adenosyl-L-methionine from L-methionine: step 1/1. Functionally, catalyzes the formation of S-adenosylmethionine (AdoMet) from methionine and ATP. The overall synthetic reaction is composed of two sequential steps, AdoMet formation and the subsequent tripolyphosphate hydrolysis which occurs prior to release of AdoMet from the enzyme. In Acholeplasma laidlawii (strain PG-8A), this protein is S-adenosylmethionine synthase.